Here is a 228-residue protein sequence, read N- to C-terminus: Sugar fermentation stimulation protein homolog (228 aa).

Belongs to the SfsA family.

This Desulfitobacterium hafniense (strain DSM 10664 / DCB-2) protein is Sugar fermentation stimulation protein homolog.